The following is a 665-amino-acid chain: DNA ligase (665 aa).

Residues 34 to 38, 83 to 84, and Glu-114 each bind NAD(+); these read DEEYD and SL. The N6-AMP-lysine intermediate role is filled by Lys-116. Positions 137, 171, 287, and 311 each coordinate NAD(+). Zn(2+) contacts are provided by Cys-405, Cys-408, Cys-424, and Cys-429. In terms of domain architecture, BRCT spans 587-665; the sequence is KKSSKLAGLT…EDEFKKMIID (79 aa).

This sequence belongs to the NAD-dependent DNA ligase family. LigA subfamily. It depends on Mg(2+) as a cofactor. Mn(2+) serves as cofactor.

It catalyses the reaction NAD(+) + (deoxyribonucleotide)n-3'-hydroxyl + 5'-phospho-(deoxyribonucleotide)m = (deoxyribonucleotide)n+m + AMP + beta-nicotinamide D-nucleotide.. Functionally, DNA ligase that catalyzes the formation of phosphodiester linkages between 5'-phosphoryl and 3'-hydroxyl groups in double-stranded DNA using NAD as a coenzyme and as the energy source for the reaction. It is essential for DNA replication and repair of damaged DNA. This is DNA ligase from Thermosipho africanus (strain TCF52B).